The primary structure comprises 362 residues: Methylthioribose-1-phosphate isomerase (362 aa).

The active-site Proton donor is Asp252.

The protein belongs to the eIF-2B alpha/beta/delta subunits family. MtnA subfamily.

The protein resides in the cytoplasm. The protein localises to the nucleus. It carries out the reaction 5-(methylsulfanyl)-alpha-D-ribose 1-phosphate = 5-(methylsulfanyl)-D-ribulose 1-phosphate. The protein operates within amino-acid biosynthesis; L-methionine biosynthesis via salvage pathway; L-methionine from S-methyl-5-thio-alpha-D-ribose 1-phosphate: step 1/6. Catalyzes the interconversion of methylthioribose-1-phosphate (MTR-1-P) into methylthioribulose-1-phosphate (MTRu-1-P). The chain is Methylthioribose-1-phosphate isomerase from Drosophila virilis (Fruit fly).